The following is a 295-amino-acid chain: Glutenin, low molecular weight subunit PTDUCD1 (295 aa).

A signal peptide spans 1-20 (MKTFLVFALLAVVATSTIAQ). The disordered stretch occupies residues 30-61 (ERPWQEQPLPPQHTLFPQQQPFPQQQQPPFSQ). A compositionally biased stretch (low complexity) spans 41 to 61 (QHTLFPQQQPFPQQQQPPFSQ).

The protein belongs to the gliadin/glutenin family. Disulfide-bridge linked aggregates.

In terms of biological role, glutenins are high-molecular weight seed storage proteins of wheat endosperm. Thought to be responsible for the visco-elastic property of wheat dough. The protein is Glutenin, low molecular weight subunit PTDUCD1 of Triticum aestivum (Wheat).